The chain runs to 842 residues: Elongation factor 2 (842 aa).

Positions 17-253 (TNVRNMSVIA…LWGDSYFNPK (237 aa)) constitute a tr-type G domain. GTP-binding positions include 26-33 (AHVDHGKS), 158-161 (NKVD), and 213-215 (SGL). Position 699 is a diphthamide (H699).

Belongs to the TRAFAC class translation factor GTPase superfamily. Classic translation factor GTPase family. EF-G/EF-2 subfamily.

The protein localises to the cytoplasm. It carries out the reaction GTP + H2O = GDP + phosphate + H(+). In terms of biological role, catalyzes the GTP-dependent ribosomal translocation step during translation elongation. During this step, the ribosome changes from the pre-translocational (PRE) to the post-translocational (POST) state as the newly formed A-site-bound peptidyl-tRNA and P-site-bound deacylated tRNA move to the P and E sites, respectively. Catalyzes the coordinated movement of the two tRNA molecules, the mRNA and conformational changes in the ribosome. The polypeptide is Elongation factor 2 (EFT1) (Debaryomyces hansenii (strain ATCC 36239 / CBS 767 / BCRC 21394 / JCM 1990 / NBRC 0083 / IGC 2968) (Yeast)).